The chain runs to 415 residues: Serine hydroxymethyltransferase (415 aa).

Residues L119 and G123–L125 contribute to the (6S)-5,6,7,8-tetrahydrofolate site. Position 228 is an N6-(pyridoxal phosphate)lysine (K228). S353 to F355 provides a ligand contact to (6S)-5,6,7,8-tetrahydrofolate.

This sequence belongs to the SHMT family. As to quaternary structure, homodimer. Pyridoxal 5'-phosphate is required as a cofactor.

Its subcellular location is the cytoplasm. It catalyses the reaction (6R)-5,10-methylene-5,6,7,8-tetrahydrofolate + glycine + H2O = (6S)-5,6,7,8-tetrahydrofolate + L-serine. It participates in one-carbon metabolism; tetrahydrofolate interconversion. The protein operates within amino-acid biosynthesis; glycine biosynthesis; glycine from L-serine: step 1/1. In terms of biological role, catalyzes the reversible interconversion of serine and glycine with tetrahydrofolate (THF) serving as the one-carbon carrier. Also exhibits THF-independent aldolase activity toward beta-hydroxyamino acids, producing glycine and aldehydes, via a retro-aldol mechanism. This Haloarcula marismortui (strain ATCC 43049 / DSM 3752 / JCM 8966 / VKM B-1809) (Halobacterium marismortui) protein is Serine hydroxymethyltransferase.